The following is a 239-amino-acid chain: Claudin-14 (239 aa).

Over 1–7 the chain is Cytoplasmic; sequence MASTAVQ. A helical membrane pass occupies residues 8-28; it reads LLGFLLSFLGMVGTLITTILP. Over 29–81 the chain is Extracellular; sequence HWRRTAHVGTNILTAVSYLKGLWMECVWHSTGIYQCQIYRSLLALPRDLQAAR. The chain crosses the membrane as a helical span at residues 82 to 102; the sequence is ALMVISCLLSGMACACAVVGM. Topologically, residues 103-115 are cytoplasmic; that stretch reads KCTRCAKGTPAKT. A helical transmembrane segment spans residues 116–136; the sequence is TFAVLGGALFLLAGLLCMVAV. The Extracellular segment spans residues 137–162; that stretch reads SWTTNDVVQNFYNPLLPSGMKFEIGQ. Residues 163-183 form a helical membrane-spanning segment; sequence ALYLGFISSSLSLIGGTLLCL. At 184–239 the chain is on the cytoplasmic side; it reads SCQDEAPYRPYPPQSRAGATTTATAPAYRPPAAYKDNRAPSVTSAAHSGYRLNDYV.

It belongs to the claudin family. As to expression, expressed in all sensory epithelia of the inner ear vestibular organs, as well as in liver and kidney.

It localises to the cell junction. It is found in the tight junction. The protein resides in the cell membrane. Its function is as follows. Plays a major role in tight junction-specific obliteration of the intercellular space, through calcium-independent cell-adhesion activity. The sequence is that of Claudin-14 (Cldn14) from Mus musculus (Mouse).